A 289-amino-acid polypeptide reads, in one-letter code: Thymidylate synthase (289 aa).

Residues R26 and 151–152 (RR) contribute to the dUMP site. Residue C171 is the Nucleophile of the active site. Residues 191–194 (RSGD), N202, and 232–234 (HVY) each bind dUMP. (6R)-5,10-methylene-5,6,7,8-tetrahydrofolate is bound at residue D194. Position 288 (A288) interacts with (6R)-5,10-methylene-5,6,7,8-tetrahydrofolate.

The protein belongs to the thymidylate synthase family. Homodimer.

It carries out the reaction dUMP + (6R)-5,10-methylene-5,6,7,8-tetrahydrofolate = 7,8-dihydrofolate + dTMP. Its pathway is pyrimidine metabolism; dTTP biosynthesis. The chain is Thymidylate synthase from Equus caballus (Horse).